The primary structure comprises 480 residues: Reticulophagy regulator 1 (480 aa).

Over residues 1–10 (MASPAPEEHA) the composition is skewed to basic and acidic residues. The interval 1 to 41 (MASPAPEEHATQGCPATEEQEPRPGVPGEEAGPEGAGPQVE) is disordered. Topologically, residues 1-43 (MASPAPEEHATQGCPATEEQEPRPGVPGEEAGPEGAGPQVEEA) are cytoplasmic. A helical membrane pass occupies residues 44-64 (AGRVAAALTWLLGEPVLWLGW). At 65–78 (RADELLSWKRPLRS) the chain is on the lumenal side. The reticulon homology domain stretch occupies residues 67 to 216 (DELLSWKRPL…LLFAFLCPLF (150 aa)). The helical transmembrane segment at 79–99 (LLAFLGANLLFWFLALTPWRV) threads the bilayer. Topologically, residues 100 to 101 (YH) are cytoplasmic. A helical membrane pass occupies residues 102–122 (LISVMILGRVIMQIIKDMVLS). Residues 123–191 (RARGAQLWRS…LVCSVCTFFT (69 aa)) lie on the Lumenal side of the membrane. A Phosphoserine modification is found at Ser132. Position 134 is a phosphoserine; by CAMK2B (Ser134). Ser136 bears the Phosphoserine mark. Residues 192-212 (ILGSYIPGVILSYLLLLFAFL) traverse the membrane as a helical segment. At 213-480 (CPLFKCNDIG…GFLSNLLGGH (268 aa)) the chain is on the cytoplasmic side. Residues 302-313 (FNLSEGYTPQTD) are compositionally biased toward polar residues. Residues 302-348 (FNLSEGYTPQTDTSDDLDRPSEEVFSRDLSDFPSLENGAGTNDEDEL) form a disordered region. A compositionally biased stretch (basic and acidic residues) spans 317–331 (DLDRPSEEVFSRDLS). An LIR motif motif is present at residues 436–441 (DDFELL). The interval 450-480 (ESELGLTQDQGAEAQQSKKSSGFLSNLLGGH) is disordered. A compositionally biased stretch (polar residues) spans 454 to 473 (GLTQDQGAEAQQSKKSSGFL).

The protein belongs to the RETREG family. In terms of assembly, homooligomer; oligomerization is enhanced following endoplasmic reticulum stress and is mediated by the reticulon homology domain. Interacts with ATG8 family modifier proteins MAP1LC3A, MAP1LC3B, GABARAP, GABARAPL1 and GABARAPL2. Phosphorylation at Ser-134 by CAMK2B enhances oligomerization and membrane scission and reticulophagy activity.

Its subcellular location is the golgi apparatus. The protein localises to the cis-Golgi network membrane. It localises to the endoplasmic reticulum membrane. Endoplasmic reticulum (ER)-anchored autophagy regulator which mediates ER delivery into lysosomes through sequestration into autophagosomes. Promotes membrane remodeling and ER scission via its membrane bending capacity and targets the fragments into autophagosomes via interaction with ATG8 family proteins. Active under basal conditions. Required for collagen quality control in a LIR motif-dependent manner. Required for long-term survival of nociceptive and autonomic ganglion neurons. The polypeptide is Reticulophagy regulator 1 (Rattus norvegicus (Rat)).